A 111-amino-acid chain; its full sequence is MKTLLLAVAVVAFVCLGSADQLGLGRQQIDWGKGQAKGPPYTLCFECNRETCSNCFKDNRCPPYHRTCYTLYRPDGNGEMKWAVKGCAKTCPTAQPGESVQCCNTPKCNDY.

Residues 1–19 (MKTLLLAVAVVAFVCLGSA) form the signal peptide. Residues 20 to 34 (DQLGLGRQQIDWGKG) constitute a propeptide that is removed on maturation. The residue at position 35 (Gln-35) is a Pyrrolidone carboxylic acid. 5 disulfide bridges follow: Cys-44–Cys-68, Cys-47–Cys-55, Cys-61–Cys-87, Cys-91–Cys-102, and Cys-103–Cys-108.

Belongs to the three-finger toxin family. Ancestral subfamily. Boigatoxin sub-subfamily. As to quaternary structure, heterodimer of A and B chains; disulfide-linked. As to expression, expressed by the venom gland.

It localises to the secreted. This bird and reptile-specific postsynaptic neurotoxin inhibits the chick muscle alpha-1-beta-1-gamma-delta (CHRNA1-CHRNB1-CHRNG-CHRND) nicotinic acetylcholine receptor (nAChR) 100-fold more compared with the mouse receptor. In vivo, produces rapid flaccid paralysis, dyspnea and increased respiratory rate in geckos. At sublethal doses geckos were immobilized for up to three days and then recovered. Chicks injected with lethal doses showed rapid onset of inactivity, dyspnea and neck droop, and no extended paralysis with survival was seen. This Boiga irregularis (Brown tree snake) protein is Irditoxin subunit B.